A 478-amino-acid polypeptide reads, in one-letter code: Glycogen synthase (478 aa).

Position 15 (Lys-15) interacts with ADP-alpha-D-glucose.

This sequence belongs to the glycosyltransferase 1 family. Bacterial/plant glycogen synthase subfamily.

It carries out the reaction [(1-&gt;4)-alpha-D-glucosyl](n) + ADP-alpha-D-glucose = [(1-&gt;4)-alpha-D-glucosyl](n+1) + ADP + H(+). The protein operates within glycan biosynthesis; glycogen biosynthesis. Synthesizes alpha-1,4-glucan chains using ADP-glucose. The chain is Glycogen synthase from Bacillus cytotoxicus (strain DSM 22905 / CIP 110041 / 391-98 / NVH 391-98).